Reading from the N-terminus, the 503-residue chain is Transcription termination/antitermination protein NusA (503 aa).

The S1 motif domain maps to 140 to 206 (GELVIGVVKR…RGPQLLVSRT (67 aa)). One can recognise a KH domain in the interval 308 to 374 (SHTMDIAVNK…FMEKLDVDEE (67 aa)).

This sequence belongs to the NusA family. As to quaternary structure, monomer. Binds directly to the core enzyme of the DNA-dependent RNA polymerase and to nascent RNA.

The protein localises to the cytoplasm. Participates in both transcription termination and antitermination. This chain is Transcription termination/antitermination protein NusA, found in Coxiella burnetii (strain RSA 493 / Nine Mile phase I).